We begin with the raw amino-acid sequence, 81 residues long: Photosystem I iron-sulfur center (81 aa).

2 4Fe-4S ferredoxin-type domains span residues 2 to 31 and 37 to 68; these read SHSV…MVPW and GQIA…IRVY. [4Fe-4S] cluster is bound by residues C11, C14, C17, C21, C48, C51, C54, and C58.

In terms of assembly, the cyanobacterial PSI reaction center is composed of one copy each of PsaA,B,C,D,E,F,I,J,K,L,M and X, and forms trimeric complexes. The cofactor is [4Fe-4S] cluster.

It is found in the cellular thylakoid membrane. The catalysed reaction is reduced [plastocyanin] + hnu + oxidized [2Fe-2S]-[ferredoxin] = oxidized [plastocyanin] + reduced [2Fe-2S]-[ferredoxin]. Functionally, apoprotein for the two 4Fe-4S centers FA and FB of photosystem I (PSI); essential for photochemical activity. FB is the terminal electron acceptor of PSI, donating electrons to ferredoxin. The C-terminus interacts with PsaA/B/D and helps assemble the protein into the PSI complex. Required for binding of PsaD and PsaE to PSI. PSI is a plastocyanin/cytochrome c6-ferredoxin oxidoreductase, converting photonic excitation into a charge separation, which transfers an electron from the donor P700 chlorophyll pair to the spectroscopically characterized acceptors A0, A1, FX, FA and FB in turn. This is Photosystem I iron-sulfur center from Synechococcus sp. (strain RCC307).